The following is a 114-amino-acid chain: T cell receptor alpha variable 10 (114 aa).

The first 21 residues, 1-21 (MKKHLTTFLVILWLYFYRGNG), serve as a signal peptide directing secretion. Residues 23 to 114 (NQVEQSPQSL…DSASYICVVS (92 aa)) form the Ig-like domain. N-linked (GlcNAc...) asparagine glycosylation is found at N39 and N45. C44 and C111 are oxidised to a cystine.

As to quaternary structure, alpha-beta TR is a heterodimer composed of an alpha and beta chain; disulfide-linked. The alpha-beta TR is associated with the transmembrane signaling CD3 coreceptor proteins to form the TR-CD3 (TcR or TCR). The assembly of alpha-beta TR heterodimers with CD3 occurs in the endoplasmic reticulum where a single alpha-beta TR heterodimer associates with one CD3D-CD3E heterodimer, one CD3G-CD3E heterodimer and one CD247 homodimer forming a stable octameric structure. CD3D-CD3E and CD3G-CD3E heterodimers preferentially associate with TR alpha and TR beta chains, respectively. The association of the CD247 homodimer is the last step of TcR assembly in the endoplasmic reticulum and is required for transport to the cell surface.

It localises to the cell membrane. In terms of biological role, v region of the variable domain of T cell receptor (TR) alpha chain that participates in the antigen recognition. Alpha-beta T cell receptors are antigen specific receptors which are essential to the immune response and are present on the cell surface of T lymphocytes. Recognize peptide-major histocompatibility (MH) (pMH) complexes that are displayed by antigen presenting cells (APC), a prerequisite for efficient T cell adaptive immunity against pathogens. Binding of alpha-beta TR to pMH complex initiates TR-CD3 clustering on the cell surface and intracellular activation of LCK that phosphorylates the ITAM motifs of CD3G, CD3D, CD3E and CD247 enabling the recruitment of ZAP70. In turn ZAP70 phosphorylates LAT, which recruits numerous signaling molecules to form the LAT signalosome. The LAT signalosome propagates signal branching to three major signaling pathways, the calcium, the mitogen-activated protein kinase (MAPK) kinase and the nuclear factor NF-kappa-B (NF-kB) pathways, leading to the mobilization of transcription factors that are critical for gene expression and essential for T cell growth and differentiation. The T cell repertoire is generated in the thymus, by V-(D)-J rearrangement. This repertoire is then shaped by intrathymic selection events to generate a peripheral T cell pool of self-MH restricted, non-autoaggressive T cells. Post-thymic interaction of alpha-beta TR with the pMH complexes shapes TR structural and functional avidity. This is T cell receptor alpha variable 10 from Homo sapiens (Human).